The following is a 213-amino-acid chain: uncharacterized protein (213 aa).

The next 3 membrane-spanning stretches (helical) occupy residues 26–46, 112–132, and 136–156; these read FINF…GLKV, ASYI…AGIW, and AGLA…SFLI.

It localises to the cell membrane. This is an uncharacterized protein from Haemophilus influenzae (strain ATCC 51907 / DSM 11121 / KW20 / Rd).